Consider the following 1088-residue polypeptide: RNA-directed RNA polymerase (1088 aa).

The region spanning 501 to 687 (LSYGDVTRFL…AKRYIAGGKI (187 aa)) is the RdRp catalytic domain.

It belongs to the reoviridae RNA-directed RNA polymerase family. In terms of assembly, interacts with VP3 (Potential). Interacts with VP2; this interaction activates VP1. Interacts with NSP5; this interaction is probably necessary for the formation of functional virus factories. Interacts with NSP2; this interaction is weak. Mg(2+) serves as cofactor.

The protein localises to the virion. It carries out the reaction RNA(n) + a ribonucleoside 5'-triphosphate = RNA(n+1) + diphosphate. RNA-directed RNA polymerase that is involved in both transcription and genome replication. Together with VP3 capping enzyme, forms an enzyme complex positioned near the channels situated at each of the five-fold vertices of the core. Following infection, the outermost layer of the virus is lost, leaving a double-layered particle (DLP) made up of the core and VP6 shell. VP1 then catalyzes the transcription of fully conservative plus-strand genomic RNAs that are extruded through the DLP's channels into the cytoplasm where they function as mRNAs for translation of viral proteins. One copy of each of the viral (+)RNAs is also recruited during core assembly, together with newly synthesized polymerase complexes and VP2. The polymerase of these novo-formed particles catalyzes the synthesis of complementary minus-strands leading to dsRNA formation. To do so, the polymerase specifically recognizes and binds 4 bases 5'-UGUG-3' in the conserved 3'-sequence of plus-strand RNA templates. VP2 presumably activates the autoinhibited VP1-RNA complex to coordinate packaging and genome replication. Once dsRNA synthesis is complete, the polymerase switches to the transcriptional mode, thus providing secondary transcription. This is RNA-directed RNA polymerase from Sus scrofa (Pig).